Reading from the N-terminus, the 227-residue chain is 7-cyano-7-deazaguanine synthase (227 aa).

7–17 (VSGGMDSLVAT) contacts ATP. Zn(2+) is bound by residues C187, C195, C198, and C201.

The protein belongs to the QueC family. It depends on Zn(2+) as a cofactor.

It catalyses the reaction 7-carboxy-7-deazaguanine + NH4(+) + ATP = 7-cyano-7-deazaguanine + ADP + phosphate + H2O + H(+). It functions in the pathway purine metabolism; 7-cyano-7-deazaguanine biosynthesis. Functionally, catalyzes the ATP-dependent conversion of 7-carboxy-7-deazaguanine (CDG) to 7-cyano-7-deazaguanine (preQ(0)). In Chlorobaculum tepidum (strain ATCC 49652 / DSM 12025 / NBRC 103806 / TLS) (Chlorobium tepidum), this protein is 7-cyano-7-deazaguanine synthase.